The following is a 269-amino-acid chain: Formamidopyrimidine-DNA glycosylase (269 aa).

The Schiff-base intermediate with DNA role is filled by Pro2. Glu3 (proton donor) is an active-site residue. The Proton donor; for beta-elimination activity role is filled by Lys57. Positions 90, 109, and 150 each coordinate DNA. The FPG-type zinc-finger motif lies at 235–269 (QVYGRKGEPCRICGMPVVGTKHAQRATFYCRQCQK). Residue Arg259 is the Proton donor; for delta-elimination activity of the active site.

This sequence belongs to the FPG family. In terms of assembly, monomer. Zn(2+) is required as a cofactor.

The catalysed reaction is Hydrolysis of DNA containing ring-opened 7-methylguanine residues, releasing 2,6-diamino-4-hydroxy-5-(N-methyl)formamidopyrimidine.. The enzyme catalyses 2'-deoxyribonucleotide-(2'-deoxyribose 5'-phosphate)-2'-deoxyribonucleotide-DNA = a 3'-end 2'-deoxyribonucleotide-(2,3-dehydro-2,3-deoxyribose 5'-phosphate)-DNA + a 5'-end 5'-phospho-2'-deoxyribonucleoside-DNA + H(+). Involved in base excision repair of DNA damaged by oxidation or by mutagenic agents. Acts as a DNA glycosylase that recognizes and removes damaged bases. Has a preference for oxidized purines, such as 7,8-dihydro-8-oxoguanine (8-oxoG). Has AP (apurinic/apyrimidinic) lyase activity and introduces nicks in the DNA strand. Cleaves the DNA backbone by beta-delta elimination to generate a single-strand break at the site of the removed base with both 3'- and 5'-phosphates. This chain is Formamidopyrimidine-DNA glycosylase, found in Klebsiella pneumoniae subsp. pneumoniae (strain ATCC 700721 / MGH 78578).